A 52-amino-acid chain; its full sequence is UPF0181 protein CGSHiGG_01050 (52 aa).

This sequence belongs to the UPF0181 family.

The chain is UPF0181 protein CGSHiGG_01050 from Haemophilus influenzae (strain PittGG).